A 901-amino-acid polypeptide reads, in one-letter code: Probable inorganic carbon transporter subunit DabA (901 aa).

C424, D426, H606, and C621 together coordinate Zn(2+).

The protein belongs to the inorganic carbon transporter (TC 9.A.2) DabA family. As to quaternary structure, forms a complex with DabB. It depends on Zn(2+) as a cofactor.

It is found in the cell membrane. In terms of biological role, part of an energy-coupled inorganic carbon pump. The sequence is that of Probable inorganic carbon transporter subunit DabA from Staphylococcus aureus (strain MSSA476).